The chain runs to 266 residues: Ribosomal RNA small subunit methyltransferase J (266 aa).

S-adenosyl-L-methionine-binding positions include 109–110 (RD), 125–126 (ER), and aspartate 185.

The protein belongs to the methyltransferase superfamily. RsmJ family.

It is found in the cytoplasm. The enzyme catalyses guanosine(1516) in 16S rRNA + S-adenosyl-L-methionine = N(2)-methylguanosine(1516) in 16S rRNA + S-adenosyl-L-homocysteine + H(+). Its function is as follows. Specifically methylates the guanosine in position 1516 of 16S rRNA. The sequence is that of Ribosomal RNA small subunit methyltransferase J from Cellvibrio japonicus (strain Ueda107) (Pseudomonas fluorescens subsp. cellulosa).